Here is a 155-residue protein sequence, read N- to C-terminus: Mediator of RNA polymerase II transcription subunit 10 (155 aa).

Positions 54–80 are disordered; the sequence is SSHTQSHAPDADTAQANPSDPPISTIE.

This sequence belongs to the Mediator complex subunit 10 family. As to quaternary structure, component of the Mediator complex.

It localises to the nucleus. Component of the Mediator complex, a coactivator involved in the regulated transcription of nearly all RNA polymerase II-dependent genes. Mediator functions as a bridge to convey information from gene-specific regulatory proteins to the basal RNA polymerase II transcription machinery. Mediator is recruited to promoters by direct interactions with regulatory proteins and serves as a scaffold for the assembly of a functional preinitiation complex with RNA polymerase II and the general transcription factors. The chain is Mediator of RNA polymerase II transcription subunit 10 (nut2) from Aspergillus terreus (strain NIH 2624 / FGSC A1156).